We begin with the raw amino-acid sequence, 549 residues long: Glucose-6-phosphate isomerase (549 aa).

E355 acts as the Proton donor in catalysis. Catalysis depends on residues H386 and K514.

Belongs to the GPI family.

The protein resides in the cytoplasm. It carries out the reaction alpha-D-glucose 6-phosphate = beta-D-fructose 6-phosphate. It participates in carbohydrate biosynthesis; gluconeogenesis. Its pathway is carbohydrate degradation; glycolysis; D-glyceraldehyde 3-phosphate and glycerone phosphate from D-glucose: step 2/4. Its function is as follows. Catalyzes the reversible isomerization of glucose-6-phosphate to fructose-6-phosphate. This is Glucose-6-phosphate isomerase from Buchnera aphidicola subsp. Acyrthosiphon pisum (strain 5A).